Reading from the N-terminus, the 360-residue chain is Peptide chain release factor 1 (360 aa).

The residue at position 235 (Gln-235) is an N5-methylglutamine. The span at 281–307 shows a compositional bias: basic and acidic residues; sequence ERQRADSERSADRRSQVGSGDRSERIR. A disordered region spans residues 281–311; sequence ERQRADSERSADRRSQVGSGDRSERIRTYNF.

Belongs to the prokaryotic/mitochondrial release factor family. Methylated by PrmC. Methylation increases the termination efficiency of RF1.

Its subcellular location is the cytoplasm. In terms of biological role, peptide chain release factor 1 directs the termination of translation in response to the peptide chain termination codons UAG and UAA. In Rhizobium meliloti (strain 1021) (Ensifer meliloti), this protein is Peptide chain release factor 1.